The primary structure comprises 392 residues: p21-activated protein kinase-interacting protein 1 (392 aa).

6 WD repeats span residues 33-72 (VADF…MKKK), 73-113 (IEHG…AKKW), 114-155 (ECLK…LVEG), 156-195 (RSAF…LDTA), 196-235 (SISG…CDSL), and 236-275 (VCLC…KMWK). The interval 312-392 (SLPPAAEPSP…RKKKKIKTMQ (81 aa)) is disordered. Phosphoserine is present on Ser320. The segment covering 325-345 (EQSKIGKKEPGDTVHKEEKRS) has biased composition (basic and acidic residues). Positions 381-392 (KKRKKKKIKTMQ) are enriched in basic residues.

As to quaternary structure, interacts with PAK1. As to expression, expressed in brain, colon, heart, kidney, liver, lung, muscle, peripheral blood leukocytes, placenta, small intestine, spleen and thymus.

The protein localises to the nucleus. It is found in the nucleolus. Functionally, negatively regulates the PAK1 kinase. PAK1 is a member of the PAK kinase family, which has been shown to play a positive role in the regulation of signaling pathways involving MAPK8 and RELA. PAK1 exists as an inactive homodimer, which is activated by binding of small GTPases such as CDC42 to an N-terminal regulatory domain. PAK1IP1 also binds to the N-terminus of PAK1, and inhibits the specific activation of PAK1 by CDC42. May be involved in ribosomal large subunit assembly. This is p21-activated protein kinase-interacting protein 1 (PAK1IP1) from Homo sapiens (Human).